Reading from the N-terminus, the 115-residue chain is Thionin-like protein 2 (115 aa).

The N-terminal stretch at 1–20 (MLVAVMIVMVIGNLLAQTAA) is a signal peptide.

It belongs to the plant thionin (TC 1.C.44) family. In terms of processing, is disulfide-linked.

It is found in the secreted. Functionally, may be involved in plant defense. The chain is Thionin-like protein 2 from Arabidopsis thaliana (Mouse-ear cress).